We begin with the raw amino-acid sequence, 253 residues long: DNA repair protein RecO (253 aa).

It belongs to the RecO family.

Involved in DNA repair and RecF pathway recombination. This chain is DNA repair protein RecO, found in Dehalococcoides mccartyi (strain ATCC BAA-2100 / JCM 16839 / KCTC 5957 / BAV1).